We begin with the raw amino-acid sequence, 467 residues long: Ribulose bisphosphate carboxylase large chain (467 aa).

2 residues coordinate substrate: residue 106 and threonine 156. Lysine 158 acts as the Proton acceptor in catalysis. Position 160 (lysine 160) interacts with substrate. Positions 184, 186, and 187 each coordinate Mg(2+). Lysine 184 bears the N6-carboxylysine mark. The Proton acceptor role is filled by histidine 276. Residues arginine 277, histidine 309, and serine 361 each contribute to the substrate site.

The protein belongs to the RuBisCO large chain family. Type I subfamily. In terms of assembly, heterohexadecamer of 8 large chains and 8 small chains. It depends on Mg(2+) as a cofactor.

The protein localises to the plastid. It localises to the chloroplast. The enzyme catalyses 2 (2R)-3-phosphoglycerate + 2 H(+) = D-ribulose 1,5-bisphosphate + CO2 + H2O. It catalyses the reaction D-ribulose 1,5-bisphosphate + O2 = 2-phosphoglycolate + (2R)-3-phosphoglycerate + 2 H(+). Functionally, ruBisCO catalyzes two reactions: the carboxylation of D-ribulose 1,5-bisphosphate, the primary event in carbon dioxide fixation, as well as the oxidative fragmentation of the pentose substrate in the photorespiration process. Both reactions occur simultaneously and in competition at the same active site. This is Ribulose bisphosphate carboxylase large chain (rbcL) from Chondrus crispus (Carrageen Irish moss).